A 278-amino-acid polypeptide reads, in one-letter code: Envelope glycoprotein L (278 aa).

The first 30 residues, 1-30 (MCRRPDCGFSFSPGPVVLLWCCLLLPIVSS), serve as a signal peptide directing secretion. In terms of domain architecture, gL betaherpesvirus-type spans 43-256 (VPAECPELTR…DKYYAGLPPE (214 aa)). C154 and C159 are joined by a disulfide.

The protein belongs to the herpesviridae glycoprotein L (gL) family. Betaherpesvirinae gL subfamily. As to quaternary structure, interacts with glycoprotein H (gH); this interaction is necessary for the correct processing and cell surface expression of gH. Forms the envelope pentamer complex (PC) composed of gH, gL, UL128, UL130, and UL131A. The pentamer interacts with host NRP2. Forms the envelope trimer complex composed of gH, gL, and gO. The trimer interacts with host PDGFRA.

It is found in the virion membrane. Its subcellular location is the host cell membrane. The protein resides in the host Golgi apparatus. It localises to the host trans-Golgi network. Functionally, the heterodimer glycoprotein H-glycoprotein L is required for the fusion of viral and plasma membranes leading to virus entry into the host cell. Acts as a functional inhibitor of gH and maintains gH in an inhibited form. Upon binding to host integrins, gL dissociates from gH leading to activation of the viral fusion glycoproteins gB and gH. In human cytomegalovirus, forms two distincts complexes to mediate viral entry, a trimer and a pentamer at the surface of the virion envelope. The gH-gL-gO trimer is required for infection in fibroblasts by interacting with host PDGFRA. The gH-gL-UL128-UL130-UL131A pentamer is essential for viral entry in epithelial, endothelial and myeloid cells via interaction with host NRP2. This is Envelope glycoprotein L from Human cytomegalovirus (strain AD169) (HHV-5).